Consider the following 547-residue polypeptide: Chorismate synthase (547 aa).

Active-site residues include H17, H104, and D500.

This sequence belongs to the chorismate synthase family.

Its subcellular location is the cytoplasm. It localises to the cytosol. It carries out the reaction 5-O-(1-carboxyvinyl)-3-phosphoshikimate = chorismate + phosphate. The catalysed reaction is FMNH2 + NADP(+) = FMN + NADPH + 2 H(+). Its pathway is metabolic intermediate biosynthesis; chorismate biosynthesis; chorismate from D-erythrose 4-phosphate and phosphoenolpyruvate: step 7/7. Bifunctional chorismate synthase and flavin reductase. Catalyzes the conversion of 5-enolpyruvylshikimate 3-phosphate (EPSP) to form chorismate. Acts also as a flavin reductase (FR) able to generate reduced flavin mononucleotide in the presence of NADPH. The protein is Chorismate synthase of Plasmodium vivax (strain Salvador I).